The chain runs to 373 residues: Dual-specificity RNA methyltransferase RlmN (373 aa).

The Proton acceptor role is filled by E94. The 240-residue stretch at 100-339 folds into the Radical SAM core domain; the sequence is EADRATLCVS…VIVRKTRGDD (240 aa). C107 and C344 are joined by a disulfide. C114, C118, and C121 together coordinate [4Fe-4S] cluster. Residues 168-169, S200, 222-224, and N301 each bind S-adenosyl-L-methionine; these read GE and SLH. The active-site S-methylcysteine intermediate is C344.

The protein belongs to the radical SAM superfamily. RlmN family. Requires [4Fe-4S] cluster as cofactor.

The protein resides in the cytoplasm. It carries out the reaction adenosine(2503) in 23S rRNA + 2 reduced [2Fe-2S]-[ferredoxin] + 2 S-adenosyl-L-methionine = 2-methyladenosine(2503) in 23S rRNA + 5'-deoxyadenosine + L-methionine + 2 oxidized [2Fe-2S]-[ferredoxin] + S-adenosyl-L-homocysteine. The catalysed reaction is adenosine(37) in tRNA + 2 reduced [2Fe-2S]-[ferredoxin] + 2 S-adenosyl-L-methionine = 2-methyladenosine(37) in tRNA + 5'-deoxyadenosine + L-methionine + 2 oxidized [2Fe-2S]-[ferredoxin] + S-adenosyl-L-homocysteine. Functionally, specifically methylates position 2 of adenine 2503 in 23S rRNA and position 2 of adenine 37 in tRNAs. m2A2503 modification seems to play a crucial role in the proofreading step occurring at the peptidyl transferase center and thus would serve to optimize ribosomal fidelity. The chain is Dual-specificity RNA methyltransferase RlmN from Tolumonas auensis (strain DSM 9187 / NBRC 110442 / TA 4).